The following is a 345-amino-acid chain: Phenylalanine--tRNA ligase alpha subunit (345 aa).

Residue glutamate 253 coordinates Mg(2+).

It belongs to the class-II aminoacyl-tRNA synthetase family. Phe-tRNA synthetase alpha subunit type 1 subfamily. In terms of assembly, tetramer of two alpha and two beta subunits. Requires Mg(2+) as cofactor.

It localises to the cytoplasm. It catalyses the reaction tRNA(Phe) + L-phenylalanine + ATP = L-phenylalanyl-tRNA(Phe) + AMP + diphosphate + H(+). The sequence is that of Phenylalanine--tRNA ligase alpha subunit from Lawsonia intracellularis (strain PHE/MN1-00).